The sequence spans 295 residues: Acetyl-coenzyme A carboxylase carboxyl transferase subunit beta (295 aa).

The segment at 1–20 (MSWLSKLMPSGIRTENTPAK) is disordered. The region spanning 28–295 (LWEKCSNCGS…QPHPQDADAA (268 aa)) is the CoA carboxyltransferase N-terminal domain. Zn(2+) contacts are provided by Cys-32, Cys-35, Cys-51, and Cys-54. Residues 32-54 (CSNCGSALYGPELEENLEVCPKC) form a C4-type zinc finger.

Belongs to the AccD/PCCB family. In terms of assembly, acetyl-CoA carboxylase is a heterohexamer composed of biotin carboxyl carrier protein (AccB), biotin carboxylase (AccC) and two subunits each of ACCase subunit alpha (AccA) and ACCase subunit beta (AccD). Requires Zn(2+) as cofactor.

The protein resides in the cytoplasm. The catalysed reaction is N(6)-carboxybiotinyl-L-lysyl-[protein] + acetyl-CoA = N(6)-biotinyl-L-lysyl-[protein] + malonyl-CoA. Its pathway is lipid metabolism; malonyl-CoA biosynthesis; malonyl-CoA from acetyl-CoA: step 1/1. In terms of biological role, component of the acetyl coenzyme A carboxylase (ACC) complex. Biotin carboxylase (BC) catalyzes the carboxylation of biotin on its carrier protein (BCCP) and then the CO(2) group is transferred by the transcarboxylase to acetyl-CoA to form malonyl-CoA. In Xanthomonas campestris pv. campestris (strain B100), this protein is Acetyl-coenzyme A carboxylase carboxyl transferase subunit beta.